We begin with the raw amino-acid sequence, 249 residues long: tRNA pseudouridine synthase A (249 aa).

Residue D53 is the Nucleophile of the active site. Residue Y111 coordinates substrate.

This sequence belongs to the tRNA pseudouridine synthase TruA family. Homodimer.

The enzyme catalyses uridine(38/39/40) in tRNA = pseudouridine(38/39/40) in tRNA. In terms of biological role, formation of pseudouridine at positions 38, 39 and 40 in the anticodon stem and loop of transfer RNAs. This is tRNA pseudouridine synthase A from Streptococcus pneumoniae (strain Taiwan19F-14).